The sequence spans 455 residues: Polyadenylation factor subunit 2 (455 aa).

WD repeat units follow at residues 80–119 (KVKH…FETI), 122–162 (AHDT…KELD), 164–203 (IHTE…QERV), 206–245 (GHHW…CVST), 248–288 (KFKH…NELM), 291–331 (RDEV…EKPI), and 337–376 (AHEK…DPNA). Disordered regions lie at residues 406–425 (EYGA…TQYN) and 430–455 (RVPE…GLSI). Over residues 432 to 446 (PEIKEPTPTTDKEQR) the composition is skewed to basic and acidic residues.

It is found in the nucleus. In terms of biological role, required for 3'-end cleavage and polyadenylation of pre-mRNAs. Also involved in chromosome segregation where it has a role in chromosome attachment to the mitotic spindle. The sequence is that of Polyadenylation factor subunit 2 (PFS2) from Candida glabrata (strain ATCC 2001 / BCRC 20586 / JCM 3761 / NBRC 0622 / NRRL Y-65 / CBS 138) (Yeast).